Reading from the N-terminus, the 135-residue chain is UPF0102 protein RPC_0320 (135 aa).

It belongs to the UPF0102 family.

The protein is UPF0102 protein RPC_0320 of Rhodopseudomonas palustris (strain BisB18).